The primary structure comprises 44 residues: Protein PsbN (44 aa).

A helical membrane pass occupies residues 6-26 (FFFTIFLWFFLLSITAYSIYV).

This sequence belongs to the PsbN family.

Its subcellular location is the plastid. It localises to the chloroplast thylakoid membrane. May play a role in photosystem I and II biogenesis. In Stigeoclonium helveticum (Green alga), this protein is Protein PsbN.